The following is a 236-amino-acid chain: LexA repressor (236 aa).

Positions 1–25 (MNDSNDTSVAGGAAGADSRVLSADS) are disordered. The segment at residues 51–71 (IREIGDAVGLTSTSSVAHQLR) is a DNA-binding region (H-T-H motif). Active-site for autocatalytic cleavage activity residues include Ser160 and Lys197.

Belongs to the peptidase S24 family. As to quaternary structure, homodimer.

The catalysed reaction is Hydrolysis of Ala-|-Gly bond in repressor LexA.. Functionally, represses a number of genes involved in the response to DNA damage (SOS response), including recA and lexA. In the presence of single-stranded DNA, RecA interacts with LexA causing an autocatalytic cleavage which disrupts the DNA-binding part of LexA, leading to derepression of the SOS regulon and eventually DNA repair. In Mycobacterium bovis (strain BCG / Pasteur 1173P2), this protein is LexA repressor.